The following is a 95-amino-acid chain: SMAD5 antisense gene protein 1 (95 aa).

Disordered stretches follow at residues 1–24 (MHKQ…SSWS) and 43–70 (SSPT…KPAN). Over residues 7–19 (LLPPPATPPPPPQ) the composition is skewed to pro residues.

In terms of tissue distribution, expressed in fetal tissues.

In Homo sapiens (Human), this protein is SMAD5 antisense gene protein 1 (SMAD5-AS1).